A 264-amino-acid polypeptide reads, in one-letter code: Apolipoprotein A-I (264 aa).

The N-terminal stretch at 1-18 (MKTVVLAVAVLFLTGSQA) is a signal peptide. 2 tandem repeats follow at residues 67-88 (LNLLENWDTLGSTVGRLQEQLG) and 89-110 (PVTQEFWDNLEKETEWLRREMN). Residues 67-264 (LNLLENWDTL…EEASKKLNAQ (198 aa)) form a 10 X approximate tandem repeats region. Methionine 109 carries the post-translational modification Methionine sulfoxide. Residues 111-121 (KDLEEVKAKVQ) form a 3; half-length repeat. 5 tandem repeats follow at residues 122-143 (PYLDQFQTKWQEEVALYRQKME), 144-165 (PLGAELRDGARQKLQELQEKLT), 166-187 (PLGEDLRDRMRHHVDALRTKMT), 188-207 (PYSDQMRDRLAERLAQLKDS), and 208-229 (PTLAEYHTKAADHLKAFGEKAK). Residue methionine 193 is modified to Methionine sulfoxide. The 9; half-length repeat unit spans residues 230-240 (PALEDLRQGLM). Methionine 240 carries the methionine sulfoxide modification. Repeat unit 10 spans residues 241 to 264 (PVFESFKTRIMSMVEEASKKLNAQ).

It belongs to the apolipoprotein A1/A4/E family. Homodimer. Interacts with APOA1BP and CLU. Component of a sperm activating protein complex (SPAP), consisting of APOA1, an immunoglobulin heavy chain, an immunoglobulin light chain and albumin. Interacts with NDRG1. Interacts with SCGB3A2. Interacts with NAXE and YJEFN3. Glycosylated. In terms of processing, palmitoylated. Post-translationally, phosphorylation sites are present in the extracellular medium. Major protein of plasma HDL, also found in chylomicrons.

The protein localises to the secreted. Functionally, participates in the reverse transport of cholesterol from tissues to the liver for excretion by promoting cholesterol efflux from tissues and by acting as a cofactor for the lecithin cholesterol acyltransferase (LCAT). As part of the SPAP complex, activates spermatozoa motility. The chain is Apolipoprotein A-I (APOAI) from Mesocricetus auratus (Golden hamster).